We begin with the raw amino-acid sequence, 259 residues long: Ferritin-2, chloroplastic (259 aa).

A chloroplast-targeting transit peptide spans 1–52 (MLLKLAPAFTLLNSHGENLSPMLSTSSQGFVLKNFSTKSRNGLLVVCASKGS). Positions 53–85 (NTKPLTGVVFEPFEEVKKELMLVPTVPQVSLAR) are extension peptide (EP). One can recognise a Ferritin-like diiron domain in the interval 86-239 (HKYSDQCEAA…EYVAQLRRVG (154 aa)). Fe cation contacts are provided by E103, E138, H141, and Q221.

Belongs to the ferritin family. As to quaternary structure, oligomer of 24 subunits. There are two types of subunits: L (light) chain and H (heavy) chain. The major chain can be light or heavy, depending on the species and tissue type. The functional molecule forms a roughly spherical shell with a diameter of 12 nm and contains a central cavity into which the insoluble mineral iron core is deposited.

It localises to the plastid. The protein localises to the chloroplast. The catalysed reaction is 4 Fe(2+) + O2 + 4 H(+) = 4 Fe(3+) + 2 H2O. Its function is as follows. Stores iron in a soluble, non-toxic, readily available form. Important for iron homeostasis. Has ferroxidase activity. Iron is taken up in the ferrous form and deposited as ferric hydroxides after oxidation. In Nicotiana tabacum (Common tobacco), this protein is Ferritin-2, chloroplastic (FER2).